A 673-amino-acid polypeptide reads, in one-letter code: B3 domain-containing protein Os01g0905400 (673 aa).

Positions 1–34 (MVELIKVPKIEQEEGNADSHGKEKADVVHEEKTE) are enriched in basic and acidic residues. The tract at residues 1 to 44 (MVELIKVPKIEQEEGNADSHGKEKADVVHEEKTEKVKRRRKRVS) is disordered. Positions 79 to 172 (LPSFFKIMVG…VFTVQIFAIS (94 aa)) form a DNA-binding region, TF-B3 1. The interval 315 to 337 (PSFSYPESSNVMTADKESERSHQ) is disordered. Residues 328 to 337 (ADKESERSHQ) show a composition bias toward basic and acidic residues. Positions 576 to 671 (SKKFCITIPP…ELSFQVLVPN (96 aa)) form a DNA-binding region, TF-B3 2.

It localises to the nucleus. The sequence is that of B3 domain-containing protein Os01g0905400 from Oryza sativa subsp. japonica (Rice).